Consider the following 318-residue polypeptide: Thymidylate synthase (318 aa).

Residues Arg-25 and Arg-180–Arg-181 contribute to the dUMP site. Cys-200 acts as the Nucleophile in catalysis. DUMP is bound by residues Arg-220–Asp-223, Asn-231, and His-261–Tyr-263. Position 223 (Asp-223) interacts with (6R)-5,10-methylene-5,6,7,8-tetrahydrofolate. Ala-317 contributes to the (6R)-5,10-methylene-5,6,7,8-tetrahydrofolate binding site.

This sequence belongs to the thymidylate synthase family. Bacterial-type ThyA subfamily. As to quaternary structure, homodimer.

It localises to the cytoplasm. It catalyses the reaction dUMP + (6R)-5,10-methylene-5,6,7,8-tetrahydrofolate = 7,8-dihydrofolate + dTMP. It participates in pyrimidine metabolism; dTTP biosynthesis. In terms of biological role, catalyzes the reductive methylation of 2'-deoxyuridine-5'-monophosphate (dUMP) to 2'-deoxythymidine-5'-monophosphate (dTMP) while utilizing 5,10-methylenetetrahydrofolate (mTHF) as the methyl donor and reductant in the reaction, yielding dihydrofolate (DHF) as a by-product. This enzymatic reaction provides an intracellular de novo source of dTMP, an essential precursor for DNA biosynthesis. The polypeptide is Thymidylate synthase (Bacillus cereus (strain ZK / E33L)).